We begin with the raw amino-acid sequence, 288 residues long: 33 kDa chaperonin (288 aa).

Disulfide bonds link cysteine 236/cysteine 238 and cysteine 269/cysteine 272.

It belongs to the HSP33 family. Post-translationally, under oxidizing conditions two disulfide bonds are formed involving the reactive cysteines. Under reducing conditions zinc is bound to the reactive cysteines and the protein is inactive.

Its subcellular location is the cytoplasm. In terms of biological role, redox regulated molecular chaperone. Protects both thermally unfolding and oxidatively damaged proteins from irreversible aggregation. Plays an important role in the bacterial defense system toward oxidative stress. The sequence is that of 33 kDa chaperonin from Lactococcus lactis subsp. cremoris (strain MG1363).